Reading from the N-terminus, the 666-residue chain is Probable potassium transport system protein Kup (666 aa).

12 consecutive transmembrane segments (helical) span residues 16-36 (GFIIALGIVYGDIGTSPLYTM), 58-78 (ISLIIWTLTLITTIKYVLVAL), 99-119 (TPWLIVPAVIGGATLLSDGAL), 141-161 (IFQNQSNVIFATLFILLLLFA), 167-187 (TGVIGKLFGPIMFIWFAFLGI), 221-241 (IFILGSIFLATTGAEALYSDL), 253-273 (WPFVKVAIILSYCGQGAWILA), 292-312 (FTMHVVILATLAAIIASQALI), 343-363 (TYIPVINWFLFAITTSIVLLF), 373-393 (YGLAITITMLMTTILLSFFLI), 402-422 (VLLMMIFFGILEGIFFLASAV), and 424-444 (FMHGGYVVVIIAVAIIFIMII).

It belongs to the HAK/KUP transporter (TC 2.A.72) family.

It localises to the cell membrane. It carries out the reaction K(+)(in) + H(+)(in) = K(+)(out) + H(+)(out). Transport of potassium into the cell. Likely operates as a K(+):H(+) symporter. In Streptococcus agalactiae serotype III (strain NEM316), this protein is Probable potassium transport system protein Kup.